The chain runs to 509 residues: Monocarboxylate transporter 9 (509 aa).

Residues 1-12 (MELKKSPDGGWG) are Cytoplasmic-facing. The next 12 helical transmembrane spans lie at 13-33 (WVIVFVSFFTQFLCYGSPLAV), 53-73 (WVGSLASGVGLLASPVCSLCV), 80-100 (PVTIFSGFMVAGGLMLSSFAP), 102-122 (IYFLFFSYGIVVGLGCGLLYT), 137-157 (GLALGLISTGSSVGLFIYAAL), 164-184 (FYGLDGCLLIVGALALNILAC), 305-325 (VFSALFIAILLFDIGGFPPSL), 342-362 (IMPLISIIGIMTAVGKLLLGI), 372-392 (LYLYVATLIIMGLALCAIPFA), 398-418 (LALLSGILGFLTGNWSIFPYV), 433-453 (GILMFFAGLGNSLGPPIVGWF), and 462-482 (IAFYFSGFCVLLGGFILLLAA). Topologically, residues 483 to 509 (LPSWDTCNKQLPKPAPTTFLYKVASNV) are cytoplasmic.

It belongs to the major facilitator superfamily. Monocarboxylate porter (TC 2.A.1.13) family.

The protein localises to the cell membrane. It carries out the reaction creatine(in) = creatine(out). It catalyses the reaction (R)-carnitine(in) = (R)-carnitine(out). Its function is as follows. Extracellular pH-and Na(+)-sensitive low-affinity creatine transporter. Also functions as a pH-independent carnitine efflux transporter. This chain is Monocarboxylate transporter 9 (SLC16A9), found in Pongo abelii (Sumatran orangutan).